The chain runs to 125 residues: MTNLLKKFNEQQMQVLAKEIPEFRPGDDLKVTFKVVDGTSERIQIFEGVCISKRNRGLHSSFAVRKVSHGESIVSQFFVYSPALVSVQVTRKGKVRRAKLYYLCKLFGKAARIKERTTYVKKKSK.

It belongs to the bacterial ribosomal protein bL19 family.

This protein is located at the 30S-50S ribosomal subunit interface and may play a role in the structure and function of the aminoacyl-tRNA binding site. The protein is Large ribosomal subunit protein bL19 of Wolbachia pipientis wMel.